We begin with the raw amino-acid sequence, 247 residues long: Small ribosomal subunit protein uS2 (247 aa).

Belongs to the universal ribosomal protein uS2 family.

The protein is Small ribosomal subunit protein uS2 of Cupriavidus taiwanensis (strain DSM 17343 / BCRC 17206 / CCUG 44338 / CIP 107171 / LMG 19424 / R1) (Ralstonia taiwanensis (strain LMG 19424)).